A 291-amino-acid chain; its full sequence is MEKPAASTEPQGSRPALGRESVQVPDDQDFRSFRSECEAEVGWNLTYSKAGVSVWVQAVEMDRTLHKIKCRMECCDVPAETLYDVLHDIEYRKKWDSNVIETFDIARLTVNADVGYYSWRCPKPLKNRDVITLRSWLPMGADYIIMNYSVKHPKYPPRKDLVRAVSIQTGYLIQSTGPKSCVITYLAQVDPKGSLPKWVVNKSSQFLAPKAMKKMYKACIKYPEWKQKHQPHFKPWLHPEQSPLPSLALSELSVQHADSLENIDESAVTESREERAGGAGGEGSDDDTSLT.

Met1 carries the N-acetylmethionine modification. The segment at 1-23 (MEKPAASTEPQGSRPALGRESVQ) is disordered. The START domain occupies 14–224 (RPALGRESVQ…MYKACIKYPE (211 aa)). Lys94, Lys197, and Lys202 each carry N6-succinyllysine. Residues Ser253, Ser259, Ser284, and Ser289 each carry the phosphoserine modification. Residues 260 to 291 (LENIDESAVTESREERAGGAGGEGSDDDTSLT) form a disordered region.

In terms of processing, phosphorylation at Ser-284 by CK2 negatively regulates lipid transfer activity, possibly by decreasing membrane association. Testis, kidney, liver, and intestine with the highest level in the testis.

The protein localises to the cell projection. Its subcellular location is the cilium. It is found in the flagellum. The protein resides in the cytoplasm. It localises to the membrane. Functionally, phospholipid transfer protein that preferentially selects lipid species containing a palmitoyl or stearoyl chain on the sn-1 and an unsaturated fatty acyl chain (18:1 or 18:2) on the sn-2 position. Able to transfer phosphatidylcholine (PC) and phosphatidyetanolamline (PE) between membranes. May play metabolic roles in sperm maturation or fertilization. This chain is START domain-containing protein 10 (Stard10), found in Mus musculus (Mouse).